A 344-amino-acid chain; its full sequence is Phosphate acyltransferase (344 aa).

The protein belongs to the PlsX family. In terms of assembly, homodimer. Probably interacts with PlsY.

The protein localises to the cytoplasm. The enzyme catalyses a fatty acyl-[ACP] + phosphate = an acyl phosphate + holo-[ACP]. It participates in lipid metabolism; phospholipid metabolism. Functionally, catalyzes the reversible formation of acyl-phosphate (acyl-PO(4)) from acyl-[acyl-carrier-protein] (acyl-ACP). This enzyme utilizes acyl-ACP as fatty acyl donor, but not acyl-CoA. In Cyanothece sp. (strain PCC 7425 / ATCC 29141), this protein is Phosphate acyltransferase.